The primary structure comprises 208 residues: Uracil phosphoribosyltransferase (208 aa).

5-phospho-alpha-D-ribose 1-diphosphate-binding positions include Arg78, Arg103, and 130 to 138 (DPMLATGGS). Uracil-binding positions include Ile193 and 198 to 200 (GDA). Asp199 contributes to the 5-phospho-alpha-D-ribose 1-diphosphate binding site.

The protein belongs to the UPRTase family. It depends on Mg(2+) as a cofactor.

The catalysed reaction is UMP + diphosphate = 5-phospho-alpha-D-ribose 1-diphosphate + uracil. It functions in the pathway pyrimidine metabolism; UMP biosynthesis via salvage pathway; UMP from uracil: step 1/1. Allosterically activated by GTP. Catalyzes the conversion of uracil and 5-phospho-alpha-D-ribose 1-diphosphate (PRPP) to UMP and diphosphate. The chain is Uracil phosphoribosyltransferase from Trichlorobacter lovleyi (strain ATCC BAA-1151 / DSM 17278 / SZ) (Geobacter lovleyi).